Consider the following 394-residue polypeptide: Phosphoglycerate kinase (394 aa).

Residues 21–23 (DFN), Arg-36, 59–62 (HLGR), Arg-118, and Arg-151 contribute to the substrate site. Position 183 is a phosphoserine (Ser-183). Positions 201 and 292 each coordinate ATP. Thr-299 bears the Phosphothreonine mark. Residues Glu-323 and 350–353 (GGDS) each bind ATP.

This sequence belongs to the phosphoglycerate kinase family. In terms of assembly, monomer.

The protein localises to the cytoplasm. The enzyme catalyses (2R)-3-phosphoglycerate + ATP = (2R)-3-phospho-glyceroyl phosphate + ADP. The protein operates within carbohydrate degradation; glycolysis; pyruvate from D-glyceraldehyde 3-phosphate: step 2/5. This Bacillus cereus (strain Q1) protein is Phosphoglycerate kinase.